The following is a 251-amino-acid chain: DVDMAMIEQLREAVDLLQDPDRLSTDVSERNVVNFYPVESAEALDLQDSALNGQIQLETSPVCEVQNDLTLQSNGSEYSPNEIRANSPAISPTANSTGPFGLKPRSVFLRPQRNLESIDPQFTIRRKMEQMREEKELVEHLRESIEMRLKVSLHEDLGAALMDGVVLCHLVNHIRPRSVASIHVPSPAVPKLSMAKCRRNVENFLEACRKLGVPEEKLCLPHHILEEKGLVKVGITVQALLDVTVTKSLFT.

Positions 73 to 97 (SNGSEYSPNEIRANSPAISPTANST) are disordered. Phosphoserine is present on residues serine 87 and serine 91. Residues 88 to 97 (PAISPTANST) are compositionally biased toward polar residues. Position 123 is a phosphothreonine (threonine 123). In terms of domain architecture, Calponin-homology (CH) spans 131 to 244 (MREEKELVEH…ITVQALLDVT (114 aa)).

Interacts (via LRR repeats) with unphosphorylated DOCK8 (via DHR-2 domain); the interaction prevents the interaction between DOCK8 and CDC42.

The protein localises to the cytoplasm. Its function is as follows. Acts as a negative regulator of GTPase CDC42 by sequestering CDC42-guanine exchange factor DOCK8. Probably by preventing CDC42 activation, negatively regulates CD4(+) T-cell migration. This is Leucine-rich repeat and calponin homology domain-containing protein 1 from Felis catus (Cat).